The following is an 81-amino-acid chain: Prophage excisionase-like protein (81 aa).

It to lambdoid phages excisionases.

The sequence is that of Prophage excisionase-like protein (xisE) from Escherichia coli (strain K12).